The following is a 122-amino-acid chain: Large ribosomal subunit protein uL18 (122 aa).

Belongs to the universal ribosomal protein uL18 family. As to quaternary structure, part of the 50S ribosomal subunit; part of the 5S rRNA/L5/L18/L25 subcomplex. Contacts the 5S and 23S rRNAs.

Its function is as follows. This is one of the proteins that bind and probably mediate the attachment of the 5S RNA into the large ribosomal subunit, where it forms part of the central protuberance. The sequence is that of Large ribosomal subunit protein uL18 from Geotalea uraniireducens (strain Rf4) (Geobacter uraniireducens).